Here is a 336-residue protein sequence, read N- to C-terminus: Biotin synthase (336 aa).

Positions 54 to 281 (NAIQLSTLLS…KAMVRLSAGR (228 aa)) constitute a Radical SAM core domain. [4Fe-4S] cluster contacts are provided by Cys-69, Cys-73, and Cys-76. Positions 113, 144, 204, and 276 each coordinate [2Fe-2S] cluster.

The protein belongs to the radical SAM superfamily. Biotin synthase family. Homodimer. [4Fe-4S] cluster serves as cofactor. [2Fe-2S] cluster is required as a cofactor.

It catalyses the reaction (4R,5S)-dethiobiotin + (sulfur carrier)-SH + 2 reduced [2Fe-2S]-[ferredoxin] + 2 S-adenosyl-L-methionine = (sulfur carrier)-H + biotin + 2 5'-deoxyadenosine + 2 L-methionine + 2 oxidized [2Fe-2S]-[ferredoxin]. The protein operates within cofactor biosynthesis; biotin biosynthesis; biotin from 7,8-diaminononanoate: step 2/2. Functionally, catalyzes the conversion of dethiobiotin (DTB) to biotin by the insertion of a sulfur atom into dethiobiotin via a radical-based mechanism. The polypeptide is Biotin synthase (Burkholderia pseudomallei (strain 1106a)).